We begin with the raw amino-acid sequence, 351 residues long: Minor outer capsid protein P9 (351 aa).

Residues 246-330 (GVPAALPQPD…EMDMPDGFHD (85 aa)) are disordered. The segment covering 285-298 (MIRKKVETSKDAPS) has biased composition (basic and acidic residues). The segment covering 315 to 324 (LEDDMSEMDM) has biased composition (acidic residues).

The protein belongs to the phytoreovirus minor outer capsid protein P9 family.

It is found in the virion. The protein resides in the host cytoplasm. Minor outer capsid protein. In Alopecurus aequalis (Barnyard grass), this protein is Minor outer capsid protein P9.